Here is a 622-residue protein sequence, read N- to C-terminus: Pentatricopeptide repeat-containing protein At5g06540 (622 aa).

PPR repeat units follow at residues 81–115 (NLFVFNLLIRCFSTGAEPSKAFGFYTQMLKSRIWP), 116–150 (DNITFPFLIKASSEMECVLVGEQTHSQIVRFGFQN), 151–181 (DVYVENSLVHMYANCGFIAAAGRIFGQMGFR), 182–212 (DVVSWTSMVAGYCKCGMVENAREMFDEMPHR), 213–247 (NLFTWSIMINGYAKNNCFEKAIDLFEFMKREGVVA), 248–282 (NETVMVSVISSCAHLGALEFGERAYEYVVKSHMTV), 283–313 (NLILGTALVDMFWRCGDIEKAIHVFEGLPET), 314–348 (DSLSWSSIIKGLAVHGHAHKAMHYFSQMISLGFIP), 349–384 (RDVTFTAVLSACSHGGLVEKGLEIYENMKKDHGIEP), and 385–419 (RLEHYGCIVDMLGRAGKLAEAENFILKMHVKPNAP). Residues 420-495 (ILGALLGACK…PPGWSLIEID (76 aa)) are type E motif. Residues 496–527 (GKINKFTMGDDQKHPEMGKIRRKWEEILGKIR) are type E(+) motif. Residues 528–622 (LIGYKGNTGD…NGVCSCRDYW (95 aa)) form a type DYW motif region.

Belongs to the PPR family. PCMP-H subfamily.

The chain is Pentatricopeptide repeat-containing protein At5g06540 (PCMP-H88) from Arabidopsis thaliana (Mouse-ear cress).